The following is a 216-amino-acid chain: Adenylate kinase (216 aa).

13–18 (GAGKGT) contributes to the ATP binding site. The segment at 33–66 (TTGDALRANKDMDISDMDTEYDTPREYMEAGDLV) is NMP. AMP is bound by residues threonine 34, arginine 39, 64 to 66 (DLV), 89 to 92 (GYPR), and glutamine 96. An LID region spans residues 125–162 (GRRVCDDCGTNYHVEFNQPEEDGVCDECGGDLIQRDDD). Residue arginine 126 participates in ATP binding. The Zn(2+) site is built by cysteine 129, cysteine 132, cysteine 149, and cysteine 152. Positions 159 and 170 each coordinate AMP. Glutamine 198 contacts ATP.

This sequence belongs to the adenylate kinase family. Monomer.

Its subcellular location is the cytoplasm. It carries out the reaction AMP + ATP = 2 ADP. The protein operates within purine metabolism; AMP biosynthesis via salvage pathway; AMP from ADP: step 1/1. Functionally, catalyzes the reversible transfer of the terminal phosphate group between ATP and AMP. Plays an important role in cellular energy homeostasis and in adenine nucleotide metabolism. This Haloarcula marismortui (strain ATCC 43049 / DSM 3752 / JCM 8966 / VKM B-1809) (Halobacterium marismortui) protein is Adenylate kinase.